A 358-amino-acid polypeptide reads, in one-letter code: Methylthioribose-1-phosphate isomerase (358 aa).

Residues 54 to 56, arginine 96, and glutamine 205 each bind substrate; that span reads RGA. The Proton donor role is filled by aspartate 246. 256–257 contributes to the substrate binding site; that stretch reads NK.

The protein belongs to the eIF-2B alpha/beta/delta subunits family. MtnA subfamily.

It catalyses the reaction 5-(methylsulfanyl)-alpha-D-ribose 1-phosphate = 5-(methylsulfanyl)-D-ribulose 1-phosphate. It functions in the pathway amino-acid biosynthesis; L-methionine biosynthesis via salvage pathway; L-methionine from S-methyl-5-thio-alpha-D-ribose 1-phosphate: step 1/6. Functionally, catalyzes the interconversion of methylthioribose-1-phosphate (MTR-1-P) into methylthioribulose-1-phosphate (MTRu-1-P). The polypeptide is Methylthioribose-1-phosphate isomerase (Pseudomonas savastanoi pv. phaseolicola (strain 1448A / Race 6) (Pseudomonas syringae pv. phaseolicola (strain 1448A / Race 6))).